A 130-amino-acid chain; its full sequence is Small ribosomal subunit protein uS8 (130 aa).

Belongs to the universal ribosomal protein uS8 family. Part of the 30S ribosomal subunit.

Its function is as follows. One of the primary rRNA binding proteins, it binds directly to 16S rRNA central domain where it helps coordinate assembly of the platform of the 30S subunit. The sequence is that of Small ribosomal subunit protein uS8 from Thermococcus kodakarensis (strain ATCC BAA-918 / JCM 12380 / KOD1) (Pyrococcus kodakaraensis (strain KOD1)).